An 817-amino-acid chain; its full sequence is Two pore calcium channel protein 1 (817 aa).

Over Met1 to Glu113 the chain is Cytoplasmic. The interval Ser20–Gly65 is disordered. Over residues Ser26–Ser51 the composition is skewed to polar residues. The helical transmembrane segment at Leu114–Leu134 threads the bilayer. Residues Lys135–His137 lie on the Extracellular side of the membrane. A helical membrane pass occupies residues Thr138–Met158. Residues Lys159–Lys172 lie on the Cytoplasmic side of the membrane. A helical transmembrane segment spans residues Arg173–Val193. At Arg194 to Thr202 the chain is on the extracellular side. Residues Arg203–Arg221 form a helical membrane-spanning segment. The Cytoplasmic segment spans residues Asn222–Asp235. The chain crosses the membrane as a helical span at residues Ile236 to Ser256. The Extracellular segment spans residues Thr257–Tyr263. An intramembrane region (helical; Pore-forming) is located at residues Phe264–Met287. The Extracellular segment spans residues Met288–Cys298. Residues Val299–Val319 form a helical membrane-spanning segment. At Val320 to Gln445 the chain is on the cytoplasmic side. A helical membrane pass occupies residues Tyr446–Leu466. Residues Lys467–Tyr480 are Extracellular-facing. A glycan (N-linked (GlcNAc...) asparagine) is linked at Asn470. The chain crosses the membrane as a helical span at residues Leu481–Val501. Over Glu502 to Leu504 the chain is Cytoplasmic. Residues Ser505–Thr527 traverse the membrane as a helical segment. The Extracellular segment spans residues Leu528 to Phe535. Residues Ile536–Leu550 form a helical membrane-spanning segment. The Cytoplasmic segment spans residues Lys551–Ala569. Residues Ser570–Phe590 form a helical membrane-spanning segment. Residues Asn591–Asn630 lie on the Extracellular side of the membrane. Residues Phe631–Met654 constitute an intramembrane region (helical; Pore-forming). The Extracellular portion of the chain corresponds to Glu655 to Thr671. Residues Phe672–Val692 form a helical membrane-spanning segment. The Cytoplasmic segment spans residues Phe693–Thr817. The stretch at Ser770–Leu794 forms a coiled coil. The tract at residues His785–Thr817 is disordered. A compositionally biased stretch (polar residues) spans Pro806–Thr817.

This sequence belongs to the calcium channel alpha-1 subunit (TC 1.A.1.11) family. Two pore calcium channel subfamily. Dimer. Interacts with MTOR; the interaction is required for TPCN1 ATP sensitivity. Interacts with STX7, STX8 and STX12. Interacts with JPT2. Found in a complex with LSM12, TPCN1 and TPCN2. N-glycosylated. As to expression, mainly expressed in epithelial tissues like lung, kidney, colon, spleen and liver (at protein level).

It localises to the lysosome membrane. It is found in the endosome membrane. Its subcellular location is the early endosome membrane. The protein localises to the recycling endosome membrane. The enzyme catalyses Na(+)(in) = Na(+)(out). It catalyses the reaction Ca(2+)(in) = Ca(2+)(out). Na(+) current is inhibited by ATP in a MTORC-dependent manner. ATP sensitivity is independent of PI(3,5)P2. Probably regulated by Mg(2+) ions, cytosolic Mg(2+) selectively inhibits outward current while lysosomal Mg(2+) modestly inhibits both the outward and inward currents. In the absence of Mg(2+), NAADP readily activates TPCN2, with properties similar to PI(3,5)P2. Both current elicited by PI(3,5)P2 as well as NAADP are inhibited by tetrandrine. Functionally, intracellular channel initially characterized as a non-selective Ca(2+)-permeable channel activated by NAADP (nicotinic acid adenine dinucleotide phosphate), it is also a voltage-gated highly-selective Na(+) channel activated directly by PI(3,5)P2 (phosphatidylinositol 3,5-bisphosphate) that senses pH changes and confers electrical excitability to organelles. Localizes to the early and recycling endosomes membranes where it plays a role in the uptake and processing of proteins and regulates organellar membrane excitability, membrane trafficking and pH homeostasis. Ion selectivity is not fixed but rather agonist-dependent and under defined ionic conditions, can be readily activated by both NAADP and PI(3,5)P2. Required for mTOR-dependent nutrient sensing. This is Two pore calcium channel protein 1 from Mus musculus (Mouse).